We begin with the raw amino-acid sequence, 264 residues long: MVKSHIGSWILVLFVAMWSDVGLCKKRPKPGGGWNTGGSRYPGQGSPGGNRYPPQGGGGWGQPHGGGWGQPHGGGWGQPHGGGWGQPHGGGWGQPHGGGGWGQGGTHSQWNKPSKPKTNMKHVAGAAAAGAVVGGLGGYMLGSAMSRPLIHFGNDYEDRYYRENMYRYPNQVYYRPVDQYSNQNNFVHDCVNITVKQHTVTTTTKGENFTETDIKMMERVVEQMCITQYQRESQAYYQRGASVILFSSPPVILLISFLIFLIVG.

Residues 1–24 (MVKSHIGSWILVLFVAMWSDVGLC) form the signal peptide. The interval 25–241 (KKRPKPGGGW…ESQAYYQRGA (217 aa)) is interaction with GRB2, ERI3 and SYN1. The interval 28–119 (PKPGGGWNTG…WNKPSKPKTN (92 aa)) is disordered. Tandem repeats lie at residues 54–62 (PQGGGGWGQ), 63–70 (PHGGGWGQ), 71–78 (PHGGGWGQ), 79–86 (PHGGGWGQ), 87–94 (PHGGGWGQ), and 95–103 (PHGGGGWGQ). The 6 X 8 AA tandem repeats of P-H-G-G-G-W-G-Q stretch occupies residues 54 to 103 (PQGGGGWGQPHGGGWGQPHGGGWGQPHGGGWGQPHGGGWGQPHGGGGWGQ). Residues 55 to 105 (QGGGGWGQPHGGGWGQPHGGGWGQPHGGGWGQPHGGGWGQPHGGGGWGQGG) are compositionally biased toward gly residues. Cu(2+)-binding residues include histidine 72, glycine 73, glycine 74, histidine 80, glycine 81, glycine 82, histidine 88, glycine 89, glycine 90, histidine 96, glycine 98, and glycine 99. A disulfide bond links cysteine 190 and cysteine 225. 2 N-linked (GlcNAc...) asparagine glycosylation sites follow: asparagine 192 and asparagine 208. The GPI-anchor amidated alanine moiety is linked to residue alanine 241. Residues 242-264 (SVILFSSPPVILLISFLIFLIVG) constitute a propeptide, removed in mature form.

It belongs to the prion family. In terms of assembly, monomer and homodimer. Has a tendency to aggregate into amyloid fibrils containing a cross-beta spine, formed by a steric zipper of superposed beta-strands. Soluble oligomers may represent an intermediate stage on the path to fibril formation. Copper binding may promote oligomerization. Interacts with GRB2, APP, ERI3/PRNPIP and SYN1. Mislocalized cytosolically exposed PrP interacts with MGRN1; this interaction alters MGRN1 subcellular location and causes lysosomal enlargement. Interacts with KIAA1191.

The protein resides in the cell membrane. It localises to the golgi apparatus. Its function is as follows. Its primary physiological function is unclear. Has cytoprotective activity against internal or environmental stresses. May play a role in neuronal development and synaptic plasticity. May be required for neuronal myelin sheath maintenance. May play a role in iron uptake and iron homeostasis. Soluble oligomers are toxic to cultured neuroblastoma cells and induce apoptosis (in vitro). Association with GPC1 (via its heparan sulfate chains) targets PRNP to lipid rafts. Also provides Cu(2+) or Zn(2+) for the ascorbate-mediated GPC1 deaminase degradation of its heparan sulfate side chains. The sequence is that of Major prion protein (PRNP) from Antilope cervicapra (Blackbuck).